Here is a 556-residue protein sequence, read N- to C-terminus: Urocanate hydratase (556 aa).

NAD(+)-binding positions include 52-53 (GG), Q130, 176-178 (GMG), E196, R201, 242-243 (NA), 263-267 (QTSAH), 273-274 (YL), and Y322. The active site involves C410. Position 492 (G492) interacts with NAD(+).

This sequence belongs to the urocanase family. NAD(+) serves as cofactor.

It localises to the cytoplasm. It carries out the reaction 4-imidazolone-5-propanoate = trans-urocanate + H2O. The protein operates within amino-acid degradation; L-histidine degradation into L-glutamate; N-formimidoyl-L-glutamate from L-histidine: step 2/3. In terms of biological role, catalyzes the conversion of urocanate to 4-imidazolone-5-propionate. The protein is Urocanate hydratase of Acidiphilium cryptum (strain JF-5).